The chain runs to 333 residues: Mevalonate kinase (333 aa).

ATP is bound at residue 109-119 (PVGAGLGSSAA). Asp160 functions as the Proton acceptor in the catalytic mechanism.

This sequence belongs to the GHMP kinase family. Mevalonate kinase subfamily. In terms of assembly, homodimer. The cofactor is Mg(2+).

The protein localises to the cytoplasm. The enzyme catalyses (R)-mevalonate + ATP = (R)-5-phosphomevalonate + ADP + H(+). It participates in isoprenoid biosynthesis; isopentenyl diphosphate biosynthesis via mevalonate pathway; isopentenyl diphosphate from (R)-mevalonate: step 1/3. Functionally, catalyzes the phosphorylation of (R)-mevalonate (MVA) to (R)-mevalonate 5-phosphate (MVAP). Functions in the mevalonate (MVA) pathway leading to isopentenyl diphosphate (IPP), a key precursor for the biosynthesis of isoprenoid compounds such as archaeal membrane lipids. The protein is Mevalonate kinase of Thermococcus sibiricus (strain DSM 12597 / MM 739).